Reading from the N-terminus, the 459-residue chain is N(6)-adenosine-methyltransferase non-catalytic subunit METTL14 (459 aa).

The tract at residues 50–73 (TCRASYDTSAPNAKRKYPDEGEAD) is disordered. Interaction with METTL3 stretches follow at residues 135 to 136 (RD) and 237 to 238 (SG). A positively charged region required for RNA-binding region spans residues 245 to 254 (RVCLRKWGYR). Interaction with METTL3 regions lie at residues 255–258 (RCED) and 278–287 (KAVFQRTKEH). The interval 297–298 (RR) is positively charged region required for RNA-binding. An interaction with METTL3 region spans residues 308–312 (NVDID). Positions 392-459 (IERLRPKSPP…GTHRGGFPTR (68 aa)) are disordered. A compositionally biased stretch (gly residues) spans 409-423 (GGGAPRGGGRGGTSA). Positions 425 to 443 (RGERGRERNRTNFRGERGG) are enriched in basic and acidic residues. Over residues 444–453 (FRGGRGGTHR) the composition is skewed to gly residues.

It belongs to the MT-A70-like family. Heterodimer; heterodimerizes with METTL3 to form an antiparallel heterodimer that constitutes an active methyltransferase. Component of the WMM complex, a N6-methyltransferase complex composed of a catalytic subcomplex, named MAC, and of an associated subcomplex, named MACOM. The MAC subcomplex is composed of METTL3 and METTL14.

The protein localises to the nucleus. The METTL3-METTL14 heterodimer forms a N6-methyltransferase complex that methylates adenosine residues at the N(6) position of some mRNAs and regulates the circadian clock, differentiation of embryonic stem cells and cortical neurogenesis. In the heterodimer formed with METTL3, METTL14 constitutes the RNA-binding scaffold that recognizes the substrate rather than the catalytic core. N6-methyladenosine (m6A), which takes place at the 5'-[AG]GAC-3' consensus sites of some mRNAs, plays a role in mRNA stability and processing. In Gallus gallus (Chicken), this protein is N(6)-adenosine-methyltransferase non-catalytic subunit METTL14 (METTL14).